Consider the following 337-residue polypeptide: UDP-N-acetylenolpyruvoylglucosamine reductase (337 aa).

One can recognise an FAD-binding PCMH-type domain in the interval 16 to 187; it reads ALPGRAARYQ…TSVIFRLAKA (172 aa). R160 is an active-site residue. S237 acts as the Proton donor in catalysis. Residue E333 is part of the active site.

FAD serves as cofactor.

The protein resides in the cytoplasm. It catalyses the reaction UDP-N-acetyl-alpha-D-muramate + NADP(+) = UDP-N-acetyl-3-O-(1-carboxyvinyl)-alpha-D-glucosamine + NADPH + H(+). It functions in the pathway cell wall biogenesis; peptidoglycan biosynthesis. Functionally, cell wall formation. The polypeptide is UDP-N-acetylenolpyruvoylglucosamine reductase (Dechloromonas aromatica (strain RCB)).